Consider the following 338-residue polypeptide: Lipoate-protein ligase A (338 aa).

The BPL/LPL catalytic domain occupies 29-216; the sequence is PATQRVLFLW…AFFAHYGERV (188 aa). Residues Arg71, 76-79, and Lys134 contribute to the ATP site; that span reads GAVF. Lys134 lines the (R)-lipoate pocket.

It belongs to the LplA family. Monomer.

It localises to the cytoplasm. The enzyme catalyses L-lysyl-[lipoyl-carrier protein] + (R)-lipoate + ATP = N(6)-[(R)-lipoyl]-L-lysyl-[lipoyl-carrier protein] + AMP + diphosphate + H(+). It functions in the pathway protein modification; protein lipoylation via exogenous pathway; protein N(6)-(lipoyl)lysine from lipoate: step 1/2. Its pathway is protein modification; protein lipoylation via exogenous pathway; protein N(6)-(lipoyl)lysine from lipoate: step 2/2. Its function is as follows. Catalyzes both the ATP-dependent activation of exogenously supplied lipoate to lipoyl-AMP and the transfer of the activated lipoyl onto the lipoyl domains of lipoate-dependent enzymes. This Salmonella schwarzengrund (strain CVM19633) protein is Lipoate-protein ligase A.